Here is a 554-residue protein sequence, read N- to C-terminus: (E)-beta-caryophyllene synthase (554 aa).

Mn(2+)-binding residues include Asp-313 and Asp-317. A DDXXD motif motif is present at residues 313 to 317; sequence DDTYD. Homodimerization stretches follow at residues 319–325 and 391–427; these read YGTLDEL and EAQW…LAVI. Residues Asp-457 and Glu-465 each coordinate Mn(2+).

The protein belongs to the terpene synthase family. In terms of assembly, homodimer. Mn(2+) is required as a cofactor. The cofactor is Mg(2+). In terms of tissue distribution, expressed in peltate glandular trichomes. Present at low levels in flowers, leaves and stems.

The enzyme catalyses (2E,6E)-farnesyl diphosphate = (-)-(E)-beta-caryophyllene + diphosphate. It catalyses the reaction (2E,6E)-farnesyl diphosphate = alpha-humulene + diphosphate. It functions in the pathway secondary metabolite biosynthesis; terpenoid biosynthesis. Its function is as follows. Involved in the biosynthesis of phenolic sesquiterpenes natural products. Sesquiterpene synthase converting (2E,6E)-farnesyl diphosphate (FPP) to (E)-beta-caryophyllene and alpha-humulene. This is (E)-beta-caryophyllene synthase from Origanum vulgare (Wild marjoram).